Reading from the N-terminus, the 363-residue chain is Mannose-1-phosphate guanyltransferase (363 aa).

Belongs to the transferase hexapeptide repeat family.

It is found in the cytoplasm. The enzyme catalyses alpha-D-mannose 1-phosphate + GTP + H(+) = GDP-alpha-D-mannose + diphosphate. Its pathway is nucleotide-sugar biosynthesis; GDP-alpha-D-mannose biosynthesis; GDP-alpha-D-mannose from alpha-D-mannose 1-phosphate (GTP route): step 1/1. In terms of biological role, involved in cell wall synthesis where it is required for glycosylation. Involved in cell cycle progression through cell-size checkpoint. Required for the correct assembly of the septum. The chain is Mannose-1-phosphate guanyltransferase (mpg1) from Schizosaccharomyces pombe (strain 972 / ATCC 24843) (Fission yeast).